An 84-amino-acid polypeptide reads, in one-letter code: Small ribosomal subunit protein bS18 (84 aa).

This sequence belongs to the bacterial ribosomal protein bS18 family. In terms of assembly, part of the 30S ribosomal subunit. Forms a tight heterodimer with protein bS6.

Functionally, binds as a heterodimer with protein bS6 to the central domain of the 16S rRNA, where it helps stabilize the platform of the 30S subunit. This chain is Small ribosomal subunit protein bS18, found in Dictyoglomus turgidum (strain DSM 6724 / Z-1310).